The primary structure comprises 389 residues: UDP-D-apiose/UDP-D-xylose synthase 2 (389 aa).

6 residues coordinate NAD(+): Phe-28, Ile-29, Asp-49, Asn-76, Ile-77, and Leu-96. UDP-alpha-D-glucuronate-binding residues include Tyr-105, Thr-139, Glu-141, Arg-182, and Tyr-185. Positions 185 and 189 each coordinate NAD(+). Tyr-185 acts as the Proton acceptor in catalysis. Position 214 (Asn-214) interacts with UDP-alpha-D-glucuronate. Residues Trp-215 and Arg-235 each contribute to the NAD(+) site. Positions 251, 253, 260, 331, 335, 337, and 341 each coordinate UDP-alpha-D-glucuronate.

Belongs to the NAD(P)-dependent epimerase/dehydratase family. Homodimer and heterodimer with AXS1. Requires NAD(+) as cofactor. Widely expressed with stronger expression in dark-grown seedlings, leaves and stems, and lower levels in flowers, siliques, pistils, pollen and roots.

Its subcellular location is the cytoplasm. It carries out the reaction UDP-alpha-D-glucuronate + H(+) = UDP-alpha-D-xylose + CO2. It catalyses the reaction UDP-alpha-D-glucuronate + H(+) = UDP-alpha-D-apiose + CO2. In terms of biological role, together with AXS1, catalyzes the conversion of UDP-D-glucuronate into a mixture of UDP-D-apiose (UDP-Api) as the main product and UDP-D-xylose to a lesser extent, via a cycle of oxidation and reduction. D-Apiose (3-C-hydroxymethyl-d-erythrose) is the only plant cell wall monosaccharide with a branched carbon skeleton and is found in rhamnogalacturonan II (RG-II), apiogalacturonan, and several apioglycosides. The protein is UDP-D-apiose/UDP-D-xylose synthase 2 of Arabidopsis thaliana (Mouse-ear cress).